We begin with the raw amino-acid sequence, 245 residues long: Nucleoprotein (245 aa).

5 residues coordinate RNA: tyrosine 30, lysine 67, arginine 106, arginine 186, and serine 196.

The protein belongs to the phlebovirus nucleocapsid protein family. As to quaternary structure, homodimer. Homohexamer; ring-shaped, necessary to form the nucleocapsid. Homopentamers; opened pentamers in solution. Binds to viral genomic RNA. Interacts with glycoprotein Gn; this interaction allows packaging of nucleocapsids into virions.

The protein localises to the virion. It localises to the host cytoplasm. It is found in the host nucleus. The protein resides in the host endoplasmic reticulum-Golgi intermediate compartment. Its subcellular location is the host Golgi apparatus. Encapsidates the genomic RNA, protecting it from nucleases. Displays high affinity for single-stranded nucleic acid. The encapsidated genomic RNA is termed the nucleocapsid (NC) or ribonucleoprotein. The ribonucleoprotein has a non-helical structure. Serves as template for viral transcription and replication. After replication, the nucleocapsid is recruited to the host Golgi apparatus by glycoprotein Gn for packaging into virus particles. This is Nucleoprotein (NP) from Dabie bandavirus (Severe fever with thrombocytopenia virus).